The sequence spans 318 residues: Olfactory receptor 13C5 (318 aa).

The Extracellular portion of the chain corresponds to 1 to 25; the sequence is MEWENHTILVEFFLKGLSGHPRLEL. Asn5 carries an N-linked (GlcNAc...) asparagine glycan. A helical transmembrane segment spans residues 26–46; it reads LFFVLIFIMYVVILLGNGTLI. Residues 47–54 lie on the Cytoplasmic side of the membrane; it reads LISILDPH. Residues 55–75 form a helical membrane-spanning segment; it reads LHTPMYFFLGNLSFLDICYTT. At 76 to 99 the chain is on the extracellular side; the sequence is TSIPSTLVSFLSERKTISLSGCAV. Cysteines 97 and 189 form a disulfide. The helical transmembrane segment at 100-120 threads the bilayer; it reads QMFLSLAMGTTECVLLGVMAF. Residues 121–139 lie on the Cytoplasmic side of the membrane; that stretch reads DRYVAICNPLRYPIIMSKD. Residues 140–160 form a helical membrane-spanning segment; the sequence is AYVPMAAGSWIIGAVNSAVQT. Residues 161 to 197 lie on the Extracellular side of the membrane; sequence VFVVQLPFCRNNIINHFTCEILAVMKLACADISGNEF. Residues 198–217 traverse the membrane as a helical segment; that stretch reads ILLVTTTLFLLTPLLLIIVS. The Cytoplasmic portion of the chain corresponds to 218 to 237; that stretch reads YTLIILSIFKISSSEGRSKP. Residues 238-258 traverse the membrane as a helical segment; sequence SSTCSARLTVVITFCGTIFLM. Over 259 to 277 the chain is Extracellular; that stretch reads YMKPKSQETLNSDDLDATD. The helical transmembrane segment at 278 to 298 threads the bilayer; sequence KLIFIFYRVMTPMMNPLIYSL. At 299–318 the chain is on the cytoplasmic side; the sequence is RNKDVKEAVKHLLRRKNFNK.

It belongs to the G-protein coupled receptor 1 family.

The protein resides in the cell membrane. Its function is as follows. Odorant receptor. The sequence is that of Olfactory receptor 13C5 (OR13C5) from Homo sapiens (Human).